Reading from the N-terminus, the 289-residue chain is MTKKLWFLPIVCLFFILGWTAPSASAGAPADTNLYSRLAVSTAGGTTLFPQTSSAVITPSADTETYYKEASGKSGTALKSALHRIISGHTKLSYSQVWNALKETDEDPANPNNVILLYTQESRAKSKNGGSVGDWNREHVWAKSHGNFGTAAGPGTDIHHLRPADVQVNSARGNMDFDNGGSEYPKAPGNYYDGDSWEPRDEVKGDVARMLFYMAVRYEGGDGYPDLELNDKTGNGSAPYMGKLSVLLKWNKQDPVDSKEKRRNEIIYEDYQHNRNPFIDHPEWADEIW.

A signal peptide spans 1–24; sequence MTKKLWFLPIVCLFFILGWTAPSA. The propeptide occupies 25 to 51; the sequence is SAGAPADTNLYSRLAVSTAGGTTLFPQ. The interval 177 to 197 is disordered; sequence FDNGGSEYPKAPGNYYDGDSW.

It is found in the secreted. Its function is as follows. Mg(2+)-activated ribonuclease which hydrolyzes RNA apparently nonspecifically into oligonucleotides with 5'-terminal phosphate. This chain is Extracellular ribonuclease (bsn), found in Bacillus amyloliquefaciens (Bacillus velezensis).